A 100-amino-acid polypeptide reads, in one-letter code: Urease subunit gamma (100 aa).

This sequence belongs to the urease gamma subunit family. In terms of assembly, heterotrimer of UreA (gamma), UreB (beta) and UreC (alpha) subunits. Three heterotrimers associate to form the active enzyme.

The protein localises to the cytoplasm. The enzyme catalyses urea + 2 H2O + H(+) = hydrogencarbonate + 2 NH4(+). Its pathway is nitrogen metabolism; urea degradation; CO(2) and NH(3) from urea (urease route): step 1/1. This chain is Urease subunit gamma, found in Clostridium perfringens.